The primary structure comprises 475 residues: Bifunctional protein HldE (475 aa).

A ribokinase region spans residues 1-321; it reads MADKIDISLY…RALHQITASH (321 aa). Residue 197 to 200 participates in ATP binding; it reads NLKE. The active site involves aspartate 266. The segment at 346-475 is cytidylyltransferase; it reads MTNGCFDILH…TSRLVEKMLN (130 aa).

The protein in the N-terminal section; belongs to the carbohydrate kinase PfkB family. This sequence in the C-terminal section; belongs to the cytidylyltransferase family. As to quaternary structure, homodimer.

The enzyme catalyses D-glycero-beta-D-manno-heptose 7-phosphate + ATP = D-glycero-beta-D-manno-heptose 1,7-bisphosphate + ADP + H(+). It carries out the reaction D-glycero-beta-D-manno-heptose 1-phosphate + ATP + H(+) = ADP-D-glycero-beta-D-manno-heptose + diphosphate. Its pathway is nucleotide-sugar biosynthesis; ADP-L-glycero-beta-D-manno-heptose biosynthesis; ADP-L-glycero-beta-D-manno-heptose from D-glycero-beta-D-manno-heptose 7-phosphate: step 1/4. It participates in nucleotide-sugar biosynthesis; ADP-L-glycero-beta-D-manno-heptose biosynthesis; ADP-L-glycero-beta-D-manno-heptose from D-glycero-beta-D-manno-heptose 7-phosphate: step 3/4. Its function is as follows. Catalyzes the phosphorylation of D-glycero-D-manno-heptose 7-phosphate at the C-1 position to selectively form D-glycero-beta-D-manno-heptose-1,7-bisphosphate. Functionally, catalyzes the ADP transfer from ATP to D-glycero-beta-D-manno-heptose 1-phosphate, yielding ADP-D-glycero-beta-D-manno-heptose. The sequence is that of Bifunctional protein HldE from Coxiella burnetii (strain Dugway 5J108-111).